A 130-amino-acid chain; its full sequence is uncharacterized protein (130 aa).

The disordered stretch occupies residues 41–64; it reads DDKDDHMDNQPKTSQTSKKVKLSE.

This is an uncharacterized protein from Streptococcus pyogenes serotype M6 (strain ATCC BAA-946 / MGAS10394).